The following is a 303-amino-acid chain: UDP-3-O-acyl-N-acetylglucosamine deacetylase (303 aa).

Residues H78, H237, and D241 each coordinate Zn(2+). H264 serves as the catalytic Proton donor.

The protein belongs to the LpxC family. Zn(2+) is required as a cofactor.

The enzyme catalyses a UDP-3-O-[(3R)-3-hydroxyacyl]-N-acetyl-alpha-D-glucosamine + H2O = a UDP-3-O-[(3R)-3-hydroxyacyl]-alpha-D-glucosamine + acetate. Its pathway is glycolipid biosynthesis; lipid IV(A) biosynthesis; lipid IV(A) from (3R)-3-hydroxytetradecanoyl-[acyl-carrier-protein] and UDP-N-acetyl-alpha-D-glucosamine: step 2/6. In terms of biological role, catalyzes the hydrolysis of UDP-3-O-myristoyl-N-acetylglucosamine to form UDP-3-O-myristoylglucosamine and acetate, the committed step in lipid A biosynthesis. The protein is UDP-3-O-acyl-N-acetylglucosamine deacetylase of Teredinibacter turnerae (strain ATCC 39867 / T7901).